Consider the following 479-residue polypeptide: Adenylate kinase 8 (479 aa).

2 adenylate kinase regions span residues 58–258 (PRIV…TYVQ) and 269–471 (PRVL…SGII). 67–72 (ASGKTT) serves as a coordination point for ATP. The segment at 87 to 113 (TLENLILNEFSYTATEARRLYLQRKTV) is NMP 1. Residues 140–143 (GIPE), Q147, and R203 contribute to the AMP site. Residues 177–206 (GKRIDPQTGEIYHTTFDWPPESEIQNRLMV) form an LID 1 region. 278–283 (GSGKSL) lines the ATP pocket. Positions 298-327 (CCGQLLKEAVADRTTFGELIQPFFEKEMAV) are NMP 2. Residues 325–327 (MAV), 354–357 (GVPR), and Q361 each bind AMP. An LID 2 region spans residues 391–424 (LRRIDPVTGERYHLMYKPPPTMEIQARLLQNPKD). Position 392 (R392) interacts with ATP.

Belongs to the adenylate kinase family. In terms of assembly, interacts with CFAP45 and CFAP52; CFAP45 and AK8 dimerization may create a cavity at the interface of the dimer that can accommodate AMP. Expressed in respiratory cells (at protein level).

It localises to the cytoplasm. Its subcellular location is the cytosol. The protein localises to the cytoskeleton. It is found in the cilium axoneme. The catalysed reaction is AMP + ATP = 2 ADP. It catalyses the reaction a 2'-deoxyribonucleoside 5'-diphosphate + ATP = a 2'-deoxyribonucleoside 5'-triphosphate + ADP. It carries out the reaction a ribonucleoside 5'-diphosphate + ATP = a ribonucleoside 5'-triphosphate + ADP. Its function is as follows. Nucleoside monophosphate (NMP) kinase that catalyzes the reversible transfer of the terminal phosphate group between nucleoside triphosphates and monophosphates. Has highest activity toward AMP, and weaker activity toward dAMP, CMP and dCMP. Also displays broad nucleoside diphosphate kinase activity. In Homo sapiens (Human), this protein is Adenylate kinase 8 (AK8).